The chain runs to 262 residues: Apolipoprotein A-Ia (262 aa).

Residues 1 to 18 (MKFVALALTLLLALGSQA) form the signal peptide. Positions 32 to 63 (YKAAALVYLNQVKDQAEKALDNLDGTDYEQYK) are 3 X approximate tandem repeats. Tandem repeats lie at residues 64-85 (LQLS…QALT) and 87-107 (YAET…ERVM). A 10 X approximate tandem repeats region spans residues 64–262 (LQLSESLTKL…YETIAKAIQA (199 aa)). Residues 108–118 (TDVEDLRSKLE) form a 3; half-length repeat. Tandem repeats lie at residues 119–140 (PHRA…EKLE), 141–162 (PVFQ…AKLE), 163–184 (PLMD…SKVV), 185–206 (PMVE…TMAA), and 207–228 (PYAE…EKIA). One copy of the 9; half-length repeat lies at 229 to 239 (PHTQDLQTRME). Residues 240-262 (PYMENVRTTFAQMYETIAKAIQA) form repeat 10.

It belongs to the apolipoprotein A1/A4/E family. As to quaternary structure, homodimer. Interacts with naxe and yjefn3.

The protein resides in the secreted. In terms of biological role, participates in the reverse transport of cholesterol from tissues to the liver for excretion by promoting cholesterol efflux from tissues and by acting as a cofactor for the lecithin cholesterol acyltransferase (LCAT). In Danio rerio (Zebrafish), this protein is Apolipoprotein A-Ia.